The following is a 752-amino-acid chain: MALLAMHSWRWAAAAAAFEKRRHSAILIRPLVSVSGSGPQWRPHQLGALGTARAYQIPESLKSITWQRLGKGNSGQFLDAAKALQVWPLIEKRTCWHGHAGGGLHTDPKEGLKDVDTRKIIKAMLSYVWPKDRPDLRARVAISLGFLGGAKAMNIVVPFMFKYAVDSLNQMSGNMLNLSDAPNTVATMATAVLIGYGVSRAGAAFFNEVRNAVFGKVAQNSIRRIAKNVFLHLHNLDLGFHLSRQTGALSKAIDRGTRGISFVLSALVFNLLPIMFEVMLVSGVLYYKCGAQFALVTLGTLGTYTAFTVAVTRWRTRFRIEMNKADNDAGNAAIDSLLNYETVKYFNNERYEAQRYDGFLKTYETASLKSTSTLAMLNFGQSAIFSVGLTAIMVLASQGIVAGTLTVGDLVMVNGLLFQLSLPLNFLGTVYRETRQALIDMNTLFTLLKVDTQIKDKVMASPLQITPQTATVAFDNVHFEYIEGQKVLSGISFEVPAGKKVAIVGGSGSGKSTIVRLLFRFYEPQKGSIYLAGQNIQDVSLESLRRAVGVVPQDAVLFHNTIYYNLLYGNISASPEEVYAVAKLAGLHDAILRMPHGYDTQVGERGLKLSGGEKQRVAIARAILKDPPVILYDEATSSLDSITEETILGAMKDVVKHRTSIFIAHRLSTVVDADEIIVLDQGKVAERGTHHGLLANPHSIYSEMWHTQSSRVQNHDNPKWEAKKENISKEEERKKLQEEIVNSVKGCGNCSC.

A mitochondrion-targeting transit peptide spans 1 to 22 (MALLAMHSWRWAAAAAAFEKRR). Residues 23–140 (HSAILIRPLV…KDRPDLRARV (118 aa)) are Mitochondrial matrix-facing. An ABC transmembrane type-1 domain is found at 140 to 436 (VAISLGFLGG…LGTVYRETRQ (297 aa)). Residues 141 to 161 (AISLGFLGGAKAMNIVVPFMF) form a helical membrane-spanning segment. Over 162-185 (KYAVDSLNQMSGNMLNLSDAPNTV) the chain is Mitochondrial intermembrane. The chain crosses the membrane as a helical span at residues 186–206 (ATMATAVLIGYGVSRAGAAFF). Over 207-259 (NEVRNAVFGKVAQNSIRRIAKNVFLHLHNLDLGFHLSRQTGALSKAIDRGTRG) the chain is Mitochondrial matrix. Residues Lys216 and Lys251 each carry the N6-acetyllysine modification. A helical transmembrane segment spans residues 260–280 (ISFVLSALVFNLLPIMFEVML). Topologically, residues 281–290 (VSGVLYYKCG) are mitochondrial intermembrane. Residues 291–311 (AQFALVTLGTLGTYTAFTVAV) traverse the membrane as a helical segment. Residues 312-382 (TRWRTRFRIE…TLAMLNFGQS (71 aa)) lie on the Mitochondrial matrix side of the membrane. Residue 315 to 319 (RTRFR) participates in glutathione binding. Ser336 carries the post-translational modification Phosphoserine. Residue Tyr340 is modified to Phosphotyrosine. Thr342 is modified (phosphothreonine). Residue 378–381 (NFGQ) coordinates glutathione. Residues 383 to 403 (AIFSVGLTAIMVLASQGIVAG) form a helical membrane-spanning segment. Over 404 to 409 (TLTVGD) the chain is Mitochondrial intermembrane. Residues 410–430 (LVMVNGLLFQLSLPLNFLGTV) traverse the membrane as a helical segment. Gly428 lines the glutathione pocket. Topologically, residues 431 to 752 (YRETRQALID…SVKGCGNCSC (322 aa)) are mitochondrial matrix. The 235-residue stretch at 472–706 (VAFDNVHFEY…PHSIYSEMWH (235 aa)) folds into the ABC transporter domain. ATP contacts are provided by residues Tyr481 and 505-516 (GGSGSGKSTIVR).

It belongs to the ABC transporter superfamily. ABCB family. Heavy Metal importer (TC 3.A.1.210) subfamily. Homodimer or heterodimer. Interacts with C10orf88/PAAT. Forms a complex with ABCB10 and FECH, where a dimeric FECH bridges ABCB7 and ABCB10 homodimers; this complex may be required for cellular iron homeostasis, mitochondrial function and heme biosynthesis. Interacts with FECH. Interacts with ATP5F1A. Interacts with COX4I1; this interaction allows the regulation of cellular iron homeostasis and cellular reactive oxygen species (ROS) levels in cardiomyocytes.

It localises to the mitochondrion inner membrane. It carries out the reaction (glutathione)4[2Fe(III)-2S] cluster(in) + ATP + H2O = (glutathione)4[2Fe(III)-2S] cluster(out) + ADP + phosphate + H(+). ATPase activity is stimulated by glutathione. Functionally, exports glutathione-coordinated iron-sulfur clusters such as [2Fe-2S]-(GS)4 cluster from the mitochondria to the cytosol in an ATP-dependent manner allowing the assembly of the cytosolic iron-sulfur (Fe/S) cluster-containing proteins and participates in iron homeostasis. Moreover, through a functional complex formed of ABCB7, FECH and ABCB10, also plays a role in the cellular iron homeostasis, mitochondrial function and heme biosynthesis. In cardiomyocytes, regulates cellular iron homeostasis and cellular reactive oxygen species (ROS) levels through its interaction with COX4I1. May also play a role in hematopoiesis. This chain is Iron-sulfur clusters transporter ABCB7, mitochondrial, found in Homo sapiens (Human).